The chain runs to 515 residues: NADH-quinone oxidoreductase subunit N (515 aa).

Helical transmembrane passes span I14–L34, W40–L60, A80–I100, T138–N158, L160–L180, Y195–G215, L239–F259, P271–L291, G307–Q327, M333–T353, M361–V381, V404–F424, G438–L458, and A485–L505.

Belongs to the complex I subunit 2 family. In terms of assembly, NDH-1 is composed of 14 different subunits. Subunits NuoA, H, J, K, L, M, N constitute the membrane sector of the complex.

Its subcellular location is the cell membrane. The catalysed reaction is a quinone + NADH + 5 H(+)(in) = a quinol + NAD(+) + 4 H(+)(out). In terms of biological role, NDH-1 shuttles electrons from NADH, via FMN and iron-sulfur (Fe-S) centers, to quinones in the respiratory chain. The immediate electron acceptor for the enzyme in this species is believed to be a menaquinone. Couples the redox reaction to proton translocation (for every two electrons transferred, four hydrogen ions are translocated across the cytoplasmic membrane), and thus conserves the redox energy in a proton gradient. The protein is NADH-quinone oxidoreductase subunit N of Saccharopolyspora erythraea (strain ATCC 11635 / DSM 40517 / JCM 4748 / NBRC 13426 / NCIMB 8594 / NRRL 2338).